The following is a 421-amino-acid chain: Medium-chain specific acyl-CoA dehydrogenase, mitochondrial (421 aa).

Residues 1-25 (MAAAFRRGCRVLRSVSHFECRTQHS) constitute a mitochondrion transit peptide. An N6-acetyllysine; alternate mark is found at K30 and K69. 2 positions are modified to N6-succinyllysine; alternate: K30 and K69. K79 carries the post-translational modification N6-acetyllysine. 158-167 (YCVTEPSAGS) serves as a coordination point for FAD. An octanoyl-CoA-binding site is contributed by S167. K179 is modified (N6-succinyllysine). FAD is bound at residue 191–193 (WIT). K212 carries the N6-acetyllysine; alternate modification. K212 is modified (N6-succinyllysine; alternate). An octanoyl-CoA-binding site is contributed by S216. N6-acetyllysine; alternate is present on residues K217, K235, K259, and K271. Residues K217, K235, K259, and K271 each carry the N6-succinyllysine; alternate modification. Octanoyl-CoA contacts are provided by D278 and R281. The residue at position 301 (K301) is an N6-acetyllysine. FAD is bound by residues 306–308 (RKT) and 316–317 (HQ). 2 residues coordinate octanoyl-CoA: R349 and T351. Residue T351 is modified to Phosphothreonine. 374 to 378 (QIFGG) is a binding site for FAD. Residue E401 coordinates octanoyl-CoA. The active-site Proton acceptor is the E401. 402 to 405 (GTAQ) contributes to the FAD binding site.

The protein belongs to the acyl-CoA dehydrogenase family. Homotetramer. Interacts with the heterodimeric electron transfer flavoprotein ETF. FAD is required as a cofactor. Acetylated. Could occur at proximity of the cofactor-binding sites and reduce the catalytic activity. Could be deacetylated by SIRT3.

The protein resides in the mitochondrion matrix. The enzyme catalyses a medium-chain 2,3-saturated fatty acyl-CoA + oxidized [electron-transfer flavoprotein] + H(+) = a medium-chain (2E)-enoyl-CoA + reduced [electron-transfer flavoprotein]. It catalyses the reaction pentanoyl-CoA + oxidized [electron-transfer flavoprotein] + H(+) = (2E)-pentenoyl-CoA + reduced [electron-transfer flavoprotein]. It carries out the reaction hexanoyl-CoA + oxidized [electron-transfer flavoprotein] + H(+) = (2E)-hexenoyl-CoA + reduced [electron-transfer flavoprotein]. The catalysed reaction is octanoyl-CoA + oxidized [electron-transfer flavoprotein] + H(+) = (2E)-octenoyl-CoA + reduced [electron-transfer flavoprotein]. The enzyme catalyses decanoyl-CoA + oxidized [electron-transfer flavoprotein] + H(+) = (2E)-decenoyl-CoA + reduced [electron-transfer flavoprotein]. It catalyses the reaction dodecanoyl-CoA + oxidized [electron-transfer flavoprotein] + H(+) = (2E)-dodecenoyl-CoA + reduced [electron-transfer flavoprotein]. It carries out the reaction tetradecanoyl-CoA + oxidized [electron-transfer flavoprotein] + H(+) = (2E)-tetradecenoyl-CoA + reduced [electron-transfer flavoprotein]. The catalysed reaction is oxidized [electron-transfer flavoprotein] + hexadecanoyl-CoA + H(+) = (2E)-hexadecenoyl-CoA + reduced [electron-transfer flavoprotein]. It participates in lipid metabolism; mitochondrial fatty acid beta-oxidation. In terms of biological role, medium-chain specific acyl-CoA dehydrogenase is one of the acyl-CoA dehydrogenases that catalyze the first step of mitochondrial fatty acid beta-oxidation, an aerobic process breaking down fatty acids into acetyl-CoA and allowing the production of energy from fats. The first step of fatty acid beta-oxidation consists in the removal of one hydrogen from C-2 and C-3 of the straight-chain fatty acyl-CoA thioester, resulting in the formation of trans-2-enoyl-CoA. Electron transfer flavoprotein (ETF) is the electron acceptor that transfers electrons to the main mitochondrial respiratory chain via ETF-ubiquinone oxidoreductase (ETF dehydrogenase). Among the different mitochondrial acyl-CoA dehydrogenases, medium-chain specific acyl-CoA dehydrogenase acts specifically on acyl-CoAs with saturated 6 to 12 carbons long primary chains. This chain is Medium-chain specific acyl-CoA dehydrogenase, mitochondrial, found in Mus musculus (Mouse).